The sequence spans 317 residues: MQRSLKWFASATTLAMLFVLIGGALVTKTGSGMGCGRSWPLCNGQWVPDHITPELIIELSHRLVSGLAGIMVLILSIWAWRAIGHVQETKFLAVISFVFLVLQGLIGAAAVVWGQSDFVLALHFGISLISFAAVLLLTLLIFEIDKTFSAASLSLDGKMRFHIYGITIYSYIVVYTGALVRHTNASLACPSWPLCAKTRLLPVQFHEWVQMGHRLAAAVIIIWIAAAAIHAVRHYRRQPVIYYGWLIALLLVLAQMTTGALVVFTQLNLYIALAHAFFISCLFGVLSYLLLLALRTRRAPVKAADHSAGEAAPATLK.

The Cytoplasmic segment spans residues 1–6 (MQRSLK). Residues 7-27 (WFASATTLAMLFVLIGGALVT) form a helical membrane-spanning segment. Residues 28–62 (KTGSGMGCGRSWPLCNGQWVPDHITPELIIELSHR) lie on the Extracellular side of the membrane. An intrachain disulfide couples C35 to C42. E58 is a catalytic residue. H61 is a binding site for heme o. The chain crosses the membrane as a helical span at residues 63-83 (LVSGLAGIMVLILSIWAWRAI). The Cytoplasmic portion of the chain corresponds to 84–90 (GHVQETK). A helical transmembrane segment spans residues 91-111 (FLAVISFVFLVLQGLIGAAAV). Residues 112 to 121 (VWGQSDFVLA) lie on the Extracellular side of the membrane. A helical transmembrane segment spans residues 122-142 (LHFGISLISFAAVLLLTLLIF). H123 serves as a coordination point for heme o. Residues 143–159 (EIDKTFSAASLSLDGKM) lie on the Cytoplasmic side of the membrane. Residues 160-180 (RFHIYGITIYSYIVVYTGALV) traverse the membrane as a helical segment. Residues 181–211 (RHTNASLACPSWPLCAKTRLLPVQFHEWVQM) lie on the Extracellular side of the membrane. A disulfide bridge connects residues C189 and C195. A helical transmembrane segment spans residues 212–232 (GHRLAAAVIIIWIAAAAIHAV). Residue H213 coordinates heme b. Topologically, residues 233–243 (RHYRRQPVIYY) are cytoplasmic. The helical transmembrane segment at 244–264 (GWLIALLLVLAQMTTGALVVF) threads the bilayer. Residues 265-270 (TQLNLY) are Extracellular-facing. Residues 271–291 (IALAHAFFISCLFGVLSYLLL) form a helical membrane-spanning segment. H275 contacts heme b. Over 292 to 317 (LALRTRRAPVKAADHSAGEAAPATLK) the chain is Cytoplasmic.

The protein belongs to the COX15/CtaA family. Type 1 subfamily. Interacts with CtaB. Heme b is required as a cofactor.

The protein resides in the cell membrane. The catalysed reaction is Fe(II)-heme o + 2 A + H2O = Fe(II)-heme a + 2 AH2. Its pathway is porphyrin-containing compound metabolism; heme A biosynthesis; heme A from heme O: step 1/1. Catalyzes the conversion of heme O to heme A by two successive hydroxylations of the methyl group at C8. The first hydroxylation forms heme I, the second hydroxylation results in an unstable dihydroxymethyl group, which spontaneously dehydrates, resulting in the formyl group of heme A. The polypeptide is Heme A synthase (Geobacillus kaustophilus (strain HTA426)).